A 350-amino-acid polypeptide reads, in one-letter code: Thymidine kinase (350 aa).

Residue 15–22 (GAHGLGKT) participates in ATP binding. Glu44 serves as the catalytic Proton acceptor. Gln88 contributes to the substrate binding site. Residue Arg178 participates in ATP binding. Substrate is bound at residue Arg184.

The protein belongs to the herpesviridae thymidine kinase family. As to quaternary structure, homodimer.

It carries out the reaction thymidine + ATP = dTMP + ADP + H(+). Its function is as follows. Catalyzes the transfer of the gamma-phospho group of ATP to thymidine to generate dTMP in the salvage pathway of pyrimidine synthesis. The dTMP serves as a substrate for DNA polymerase during viral DNA replication. Allows the virus to be reactivated and to grow in non-proliferative cells lacking a high concentration of phosphorylated nucleic acid precursors. This chain is Thymidine kinase, found in Bos taurus (Bovine).